The following is a 434-amino-acid chain: Glutamate-1-semialdehyde 2,1-aminomutase (434 aa).

The residue at position 273 (K273) is an N6-(pyridoxal phosphate)lysine.

The protein belongs to the class-III pyridoxal-phosphate-dependent aminotransferase family. HemL subfamily. Homodimer. Requires pyridoxal 5'-phosphate as cofactor.

It localises to the cytoplasm. The catalysed reaction is (S)-4-amino-5-oxopentanoate = 5-aminolevulinate. It functions in the pathway porphyrin-containing compound metabolism; protoporphyrin-IX biosynthesis; 5-aminolevulinate from L-glutamyl-tRNA(Glu): step 2/2. The sequence is that of Glutamate-1-semialdehyde 2,1-aminomutase from Polynucleobacter asymbioticus (strain DSM 18221 / CIP 109841 / QLW-P1DMWA-1) (Polynucleobacter necessarius subsp. asymbioticus).